The chain runs to 528 residues: Importin subunit alpha-2 (528 aa).

The span at 1 to 15 shows a compositional bias: low complexity; that stretch reads MADDSASPSPSSASP. The tract at residues 1–36 is disordered; the sequence is MADDSASPSPSSASPLQHHREALKSSVRNTAASRRR. ARM repeat units follow at residues 125–165, 167–206, 209–248, 253–292, 294–335, 338–383, 386–425, and 438–477; these read VPLV…NIAA, EPEETKSLLPALPLLIAHLGEKSSTLVAEQCAWAIGNVAG, AELRSTLLAQGALRPLTRLMFSSKGSTARTAAWAMSNLIK, KAANELITIDGVLNAIIASLEKEDEELATEVAWVVVYLSA, SDRG…NLIA, DYMV…NIAA, FEHKKLIFASEATPVLIRLVTSMQFDIRREAAYTLGNLCV, and VEHLVAIVDGGALPGFIHLVRSADVDTAGLGLQFLELVMR.

This sequence belongs to the importin alpha family. As to quaternary structure, forms a complex with importin subunit beta-1. The whole complex, most stable and composed of importin alpha, importin beta and NLS substrate, is referred to as PTAC or pore targeting complex. Expressed in root, callus, and etiolated leaf. Low expression in green leaf.

The protein resides in the cytoplasm. The protein localises to the perinuclear region. Binds specifically and directly to substrates containing either a simple or bipartite NLS motif. Promotes docking of import substrates to the nuclear envelope. The chain is Importin subunit alpha-2 from Oryza sativa subsp. japonica (Rice).